The primary structure comprises 378 residues: MIMALSKTFGQKPVKFQLEEDGEYYMIGSEVGNYLRMFRGSLYKRYPSLWRRLATVEERKKIVASSHGKKYHGYTTLATSVTLLKASEVEEILDGNDEKYKAVSISTEPPTYLREQKAKRNSQWVPTLPNSSHHLDAVPCSTTINRNRMGRDKKRTFPLCFDDHDPAVIHENAAQSEVLVPIRLDMEIDGQKLRDAFTWNMNEKLMTPEMFAEILCDDLDLNPLAFVPAIASAIRQQIESYPTDSILEDQSDQRVIIKLNIHVGNISLVDQFEWDMSEKENSPEKFALKLCSELGLGGEFVTTIAYSIRGQLSWHQKTYAFSENPLPTVEIAIRNTGDADQWCPLLETLTDAEMEKKIRDQDRNTRRMRRLANTAPAW.

The segment at 1 to 106 (MIMALSKTFG…DEKYKAVSIS (106 aa)) is DNA-binding.

This sequence belongs to the SNF5 family. In terms of assembly, component of the multiprotein chromatin-remodeling complexes SWI/SNF. Component of neural progenitors-specific chromatin remodeling complex (npBAF complex) and the neuron-specific chromatin remodeling complex (nBAF complex). Component of the BAF (SWI/SNF) chromatin remodeling complex. Component of the SWI/SNF-B (PBAF) chromatin remodeling complex. Binds to double-stranded DNA.

Its subcellular location is the nucleus. Involved in chromatin-remodeling. Core component of the BAF (SWI/SNF) complex. This ATP-dependent chromatin-remodeling complex plays important roles in cell proliferation and differentiation, in cellular antiviral activities and inhibition of tumor formation. Belongs to the neural progenitors-specific chromatin remodeling complex (npBAF complex) and the neuron-specific chromatin remodeling complex (nBAF complex) and may play a role in neural development. The sequence is that of SWI/SNF-related matrix-associated actin-dependent regulator of chromatin subfamily B member 1 (smarcb1) from Xenopus tropicalis (Western clawed frog).